The primary structure comprises 362 residues: Large ribosomal subunit protein uL2m (362 aa).

The N-terminal 23 residues, 1-23 (MLSYNRFRGYLIPQIHALKLFRY), are a transit peptide targeting the mitochondrion. The tract at residues 306–362 (AMNPCDHPHGGGGGKSIGNKPSQSPWGVLAKGGYKTRRGKNVNKLLVRDRPRGKEKR) is disordered. Basic and acidic residues predominate over residues 351–362 (LVRDRPRGKEKR).

The protein belongs to the universal ribosomal protein uL2 family. As to quaternary structure, component of the mitochondrial large ribosomal subunit (mt-LSU). Mature yeast 74S mitochondrial ribosomes consist of a small (37S) and a large (54S) subunit. The 37S small subunit contains a 15S ribosomal RNA (15S mt-rRNA) and at least 32 different proteins. The 54S large subunit contains a 21S rRNA (21S mt-rRNA) and at least 45 different proteins. uL2m has a Na/K ligand binding site.

It is found in the mitochondrion. Component of the mitochondrial ribosome (mitoribosome), a dedicated translation machinery responsible for the synthesis of mitochondrial genome-encoded proteins, including at least some of the essential transmembrane subunits of the mitochondrial respiratory chain. The mitoribosomes are attached to the mitochondrial inner membrane and translation products are cotranslationally integrated into the membrane. The polypeptide is Large ribosomal subunit protein uL2m (rml2) (Schizosaccharomyces pombe (strain 972 / ATCC 24843) (Fission yeast)).